Here is a 111-residue protein sequence, read N- to C-terminus: uncharacterized protein (111 aa).

The region spanning Leu-8–Lys-111 is the HIT domain. A Histidine triad motif motif is present at residues His-100–His-104.

This is an uncharacterized protein from Mesomycoplasma hyorhinis (Mycoplasma hyorhinis).